The following is a 409-amino-acid chain: Outer membrane protein YopM (409 aa).

LRR repeat units lie at residues 72-91, 92-113, 114-131, 132-153, 154-173, 174-195, 196-215, 216-237, 238-257, 258-279, 280-297, 298-317, 318-339, 340-357, and 358-379; these read QAHE…ELPP, HLES…PQSL, KSLL…DLPP, LLEY…QNSS, FLKI…DLPP, SLEF…QNLP, FLTA…DLPL, SLES…QNLP, FLTT…DLPP, SLEA…PQSL, TFLD…ELPP, NLYY…DLPP, SLEE…PPRL, ERLI…ELPQ, and NLKQ…PESV. Positions 246 and 266 each coordinate Ca(2+). Ca(2+) contacts are provided by Asn-307, Glu-308, and Asn-326.

The protein belongs to the LRR-containing bacterial E3 ligase family. Homotetramer forming a hollow cylinder with an inner diameter of approximately 35 angstroms.

Its subcellular location is the cell outer membrane. The protein localises to the secreted. Its function is as follows. Effector proteins function to alter host cell physiology and promote bacterial survival in host tissues. The polypeptide is Outer membrane protein YopM (yopM) (Yersinia pestis).